We begin with the raw amino-acid sequence, 448 residues long: Exodeoxyribonuclease 7 large subunit (448 aa).

The protein belongs to the XseA family. Heterooligomer composed of large and small subunits.

It localises to the cytoplasm. It catalyses the reaction Exonucleolytic cleavage in either 5'- to 3'- or 3'- to 5'-direction to yield nucleoside 5'-phosphates.. Its function is as follows. Bidirectionally degrades single-stranded DNA into large acid-insoluble oligonucleotides, which are then degraded further into small acid-soluble oligonucleotides. The protein is Exodeoxyribonuclease 7 large subunit of Shewanella baltica (strain OS223).